The following is a 70-amino-acid chain: Brevinin-1Vb (70 aa).

Positions 1 to 22 are cleaved as a signal peptide; sequence MFTLKKSLLLLFFLGTINLSLC. Positions 23–44 are excised as a propeptide; the sequence is EEERNAEEERRDEPDEMNVEVE. An intrachain disulfide couples Cys64 to Cys70.

In terms of tissue distribution, expressed by the skin glands.

The protein localises to the secreted. Functionally, antimicrobial peptide. The sequence is that of Brevinin-1Vb from Odorrana versabilis (Chinese bamboo leaf odorous frog).